Here is a 445-residue protein sequence, read N- to C-terminus: tRNA-2-methylthio-N(6)-dimethylallyladenosine synthase (445 aa).

One can recognise an MTTase N-terminal domain in the interval 2–117; that stretch reads QGLYIKSYGC…LPELIVKARK (116 aa). Residues C11, C47, C80, C157, C161, and C164 each contribute to the [4Fe-4S] cluster site. Positions 143–374 constitute a Radical SAM core domain; the sequence is KNQKVSAFIS…QELVHKQQLE (232 aa). Positions 377–441 constitute a TRAM domain; the sequence is KKMIGETHPV…KNHLTGIIPN (65 aa).

It belongs to the methylthiotransferase family. MiaB subfamily. In terms of assembly, monomer. Requires [4Fe-4S] cluster as cofactor.

It is found in the cytoplasm. The enzyme catalyses N(6)-dimethylallyladenosine(37) in tRNA + (sulfur carrier)-SH + AH2 + 2 S-adenosyl-L-methionine = 2-methylsulfanyl-N(6)-dimethylallyladenosine(37) in tRNA + (sulfur carrier)-H + 5'-deoxyadenosine + L-methionine + A + S-adenosyl-L-homocysteine + 2 H(+). Catalyzes the methylthiolation of N6-(dimethylallyl)adenosine (i(6)A), leading to the formation of 2-methylthio-N6-(dimethylallyl)adenosine (ms(2)i(6)A) at position 37 in tRNAs that read codons beginning with uridine. In Ehrlichia ruminantium (strain Welgevonden), this protein is tRNA-2-methylthio-N(6)-dimethylallyladenosine synthase.